A 327-amino-acid chain; its full sequence is Malate dehydrogenase (327 aa).

11–17 (GAAGQIS) serves as a coordination point for NAD(+). Residues Arg92 and Arg98 each coordinate substrate. NAD(+) contacts are provided by residues Asn105, Gln112, and 129 to 131 (VGN). Residues Asn131 and Arg162 each contribute to the substrate site. Catalysis depends on His187, which acts as the Proton acceptor.

This sequence belongs to the LDH/MDH superfamily. MDH type 2 family.

The catalysed reaction is (S)-malate + NAD(+) = oxaloacetate + NADH + H(+). Its function is as follows. Catalyzes the reversible oxidation of malate to oxaloacetate. This is Malate dehydrogenase from Cellvibrio japonicus (strain Ueda107) (Pseudomonas fluorescens subsp. cellulosa).